The following is a 1011-amino-acid chain: Multiple C2 domain and transmembrane region protein 7 (1011 aa).

One can recognise a C2 1 domain in the interval 1–110 (MMMSNLKLGV…PHSDAVVLHF (110 aa)). Residues 178-195 (QEHQHQHPQGPNQSSSLA) show a composition bias toward polar residues. Residues 178-201 (QEHQHQHPQGPNQSSSLAAEQDNH) are disordered. C2 domains lie at 261–381 (IHKD…PQWY), 421–546 (VDCS…ARWY), and 587–709 (YSSD…THSY). Residues Asp294, Asp300, Asp347, Asp349, and Asp354 each contribute to the Ca(2+) site. 3 helical membrane-spanning segments follow: residues 812–832 (MMTV…ICSW), 846–866 (LMLV…MFLI), and 954–974 (IFVI…IQIV).

It belongs to the MCTP family. It depends on Ca(2+) as a cofactor. In terms of tissue distribution, accumulates specifically in hydathodes. Restricted the basal meristem of roots. Observed in flowers.

The protein resides in the membrane. The protein localises to the vesicle. It is found in the endosome membrane. Its function is as follows. May function as a signaling molecule by regulating the trafficking of other regulators. This chain is Multiple C2 domain and transmembrane region protein 7, found in Arabidopsis thaliana (Mouse-ear cress).